The following is a 150-amino-acid chain: 3-dehydroquinate dehydratase (150 aa).

Tyr-26 functions as the Proton acceptor in the catalytic mechanism. Substrate is bound by residues Asn-77, His-83, and Asp-90. The active-site Proton donor is His-103. Substrate-binding positions include 104-105 and Arg-114; that span reads LS.

It belongs to the type-II 3-dehydroquinase family. In terms of assembly, homododecamer.

The enzyme catalyses 3-dehydroquinate = 3-dehydroshikimate + H2O. Its pathway is metabolic intermediate biosynthesis; chorismate biosynthesis; chorismate from D-erythrose 4-phosphate and phosphoenolpyruvate: step 3/7. In terms of biological role, catalyzes a trans-dehydration via an enolate intermediate. This Pectobacterium atrosepticum (strain SCRI 1043 / ATCC BAA-672) (Erwinia carotovora subsp. atroseptica) protein is 3-dehydroquinate dehydratase.